A 790-amino-acid polypeptide reads, in one-letter code: Cadherin-6 (790 aa).

An N-terminal signal peptide occupies residues 1 to 18; sequence MRTYRYFLLLFWVGQPYP. Positions 19–53 are excised as a propeptide; the sequence is TFSTPLSKRTSGFPAKKRTLELSGNSKNELSRSKR. Cadherin domains follow at residues 54–159, 160–268, 269–383, 384–486, and 487–608; these read SWMW…EPIF, TKEV…PPRF, PQST…PPVF, SKLA…DNPP, and EFAE…LVHP. The Extracellular portion of the chain corresponds to 54–615; sequence SWMWNQFFLL…VHPTGLSTGA (562 aa). The N-linked (GlcNAc...) asparagine glycan is linked to N255. The tract at residues 261–291 is disordered; the sequence is VNDNPPRFPQSTYQFKTPESSPPGTPIGRIK. Residues 269–279 show a composition bias toward polar residues; sequence PQSTYQFKTPE. N-linked (GlcNAc...) asparagine glycans are attached at residues N399, N437, N455, and N536. A helical membrane pass occupies residues 616–636; it reads LIAILLCIVTLLVTVVLFAAL. The Cytoplasmic portion of the chain corresponds to 637–790; the sequence is RRQRKKEPLI…YGGVDSDKDS (154 aa). 2 positions are modified to phosphoserine: S786 and S790.

Its subcellular location is the cell membrane. Its function is as follows. Cadherins are calcium-dependent cell adhesion proteins. They preferentially interact with themselves in a homophilic manner in connecting cells; cadherins may thus contribute to the sorting of heterogeneous cell types. In Bos taurus (Bovine), this protein is Cadherin-6 (CDH6).